A 259-amino-acid polypeptide reads, in one-letter code: Troponin T, fast skeletal muscle (259 aa).

The segment covering 1–36 (MSDEETEQVEEQYEEEEEAQEEEVQEEAPEPEEVQE) has biased composition (acidic residues). The tract at residues 1–62 (MSDEETEQVE…EKVDFDDIQK (62 aa)) is disordered. Serine 2 is subject to N-acetylserine. Serine 2 is subject to Phosphoserine. Residues 50–62 (PEGEKVDFDDIQK) show a composition bias toward basic and acidic residues. Residue serine 78 is modified to Phosphoserine. Over residues 101 to 143 (RAERAEQQRIRAEKERERQNRLAEEKARREEEDAKRRAEDDLK) the composition is skewed to basic and acidic residues. Residues 101–180 (RAERAEQQRI…TAREMKKKIL (80 aa)) form a disordered region. A phosphoserine mark is found at serine 149, serine 156, and serine 157. A compositionally biased stretch (basic and acidic residues) spans 171–180 (TAREMKKKIL). Phosphoserine is present on serine 193. Tyrosine 209 carries the phosphotyrosine modification. Residues 235–259 (RIDQAQKHSKKAGATAKGKVGGRWK) are disordered.

Belongs to the troponin T family.

Functionally, troponin T is the tropomyosin-binding subunit of troponin, the thin filament regulatory complex which confers calcium-sensitivity to striated muscle actomyosin ATPase activity. The protein is Troponin T, fast skeletal muscle (Tnnt3) of Rattus norvegicus (Rat).